A 205-amino-acid chain; its full sequence is Regulator of G-protein signaling 4 (205 aa).

S-palmitoyl cysteine attachment occurs at residues Cys-2, Cys-12, and Cys-95. In terms of domain architecture, RGS spans 62 to 178 (SLENLISHEC…LKSRFYLDLV (117 aa)).

In terms of processing, palmitoylated on Cys-2 and/or Cys-12. Post-translationally, phosphorylated by cyclic GMP-dependent protein kinase. As to expression, expressed in brain and heart. Expressed in brain at protein level. Expressed in prefontal and visual cortex. Isoform 4 and isoform 5 are expressed ubiquitously. Isoform 1, isoform 2 and isoform 3 are not expressed in the cerebellum.

Inhibits signal transduction by increasing the GTPase activity of G protein alpha subunits thereby driving them into their inactive GDP-bound form. Activity on G(z)-alpha is inhibited by phosphorylation of the G-protein. Activity on G(z)-alpha and G(i)-alpha-1 is inhibited by palmitoylation of the G-protein. This is Regulator of G-protein signaling 4 (RGS4) from Homo sapiens (Human).